A 128-amino-acid chain; its full sequence is Infection structure-specific protein 56 (128 aa).

2 stretches are compositionally biased toward polar residues: residues 27–36 (HATYPQSQPH) and 87–101 (TSIS…DSQS). 2 disordered regions span residues 27 to 48 (HATY…AVPS) and 86 to 128 (GTSI…STSA). A compositionally biased stretch (basic and acidic residues) spans 115–128 (KDAKKELKDPSTSA).

Functionally, general role in the development of germlings including formation of the infection structures. The polypeptide is Infection structure-specific protein 56 (INF56) (Uromyces appendiculatus (Rust fungus)).